We begin with the raw amino-acid sequence, 5541 residues long: Malpibaldin synthetase (5541 aa).

The span at 1 to 13 (MGDKRPDGIKSAE) shows a compositional bias: basic and acidic residues. Residues 1–26 (MGDKRPDGIKSAESHGQPSAPFGAEN) form a disordered region. The condensation 1 stretch occupies residues 137–378 (KEDDIARDES…IDIISPAEKT (242 aa)). Residues 401–799 (FEEQVDKSPD…GRNDDQVKIR (399 aa)) are adenylation 1. The region spanning 901-975 (VPCGETEDAI…VLAQDLSKHQ (75 aa)) is the Carrier 1 domain. At Ser936 the chain carries O-(pantetheine 4'-phosphoryl)serine. The dual epimerase/condensation (E/C) domain 1 stretch occupies residues 1021–1469 (QDVYSLAPLQ…LPLDERTKLL (449 aa)). The interval 1489 to 1899 (FEQQVKQSPI…GRNDDQIKIR (411 aa)) is adenylation 2. The 75-residue stretch at 2001–2075 (SPQGRIECAL…SFAQAFKGQL (75 aa)) folds into the Carrier 2 domain. Ser2036 is subject to O-(pantetheine 4'-phosphoryl)serine. Residues 2095–2537 (ELSFSQQRLW…LGSTEEELLL (443 aa)) are condensation 2. The interval 2557-2956 (FEDQVERSPD…GRNDDQVKIR (400 aa)) is adenylation 3. A Carrier 3 domain is found at 3058 to 3132 (EPQGEVEMKL…VLAASITRGC (75 aa)). Ser3093 carries the O-(pantetheine 4'-phosphoryl)serine modification. The segment at 3182 to 3616 (QDIYSLSPLQ…VIPAEEHDLL (435 aa)) is dual epimerase/condensation (E/C) domain 2. The adenylation 4 stretch occupies residues 3637–4038 (FENQVRERPE…GRNDEQVKIR (402 aa)). In terms of domain architecture, Carrier 4 spans 4140–4214 (APRGDIEISL…VLAASLNTHQ (75 aa)). Ser4175 carries the O-(pantetheine 4'-phosphoryl)serine modification. The dual epimerase/condensation (E/C) domain 3 stretch occupies residues 4260-4695 (VQDVYSLSPL…VIPAEEHDLL (436 aa)). An adenylation 5 region spans residues 4716 to 5117 (FENQVRERPE…GRNDEQVKIR (402 aa)). In terms of domain architecture, Carrier 5 spans 5219–5294 (LPSGDVEIGL…ELAQKLVQGG (76 aa)). Ser5254 carries the O-(pantetheine 4'-phosphoryl)serine modification. The thioesterase (TE) domain stretch occupies residues 5315-5523 (PLFCIHSGLG…VECTHIEMDK (209 aa)).

It belongs to the NRP synthetase family.

Nonribosomal peptide synthetase that catalyzes the biosynthesis of the hydrophobic cyclopentapeptides malpibaldins, natural products that show biosurfactant activities. Module 3 shows promiscuous adenylation (accepting either Trp, Phe or Tyr) leading to the parallel production of multiple products from one NRPS assembly line, including malpibaldin A corresponding to cyclo(-L-Leu-D-Leu-D-Phe-L-Leu-D-Val-), malpibaldin B corresponding to cyclo(-L-Leu-D-Leu-D-Tyr-L-Leu-D-Val-) and malpibaldin C corresponding to cyclo(-Leu-Leu-Trp-Leu-Val-). This chain is Malpibaldin synthetase, found in Mortierella alpina (Oleaginous fungus).